Consider the following 370-residue polypeptide: Ubiquitin carboxyl-terminal hydrolase 12 (370 aa).

The Required for plasma membrane localization of USP12/WDR20 motif lies at 1–4 (MEIL). Positions 39–369 (FGLVNFGNTC…SGYILFYQSR (331 aa)) constitute a USP domain. C48 serves as the catalytic Nucleophile. Residues 146 to 157 (QEKQNGRLRNGD) are compositionally biased toward basic and acidic residues. Residues 146–168 (QEKQNGRLRNGDVDSEDNNSTPD) are disordered. Zn(2+) is bound by residues C186, C189, C233, and C236. H317 serves as the catalytic Proton acceptor.

The protein belongs to the peptidase C19 family. USP12/USP46 subfamily. As to quaternary structure, interacts with WDR48. Interacts with WDR20; this interaction promotes translocation of the USP12 complex to the plasma membrane. Component of the USP12-WDR20-WDR48 deubiquitinating complex. Component of the USP12-DMWD-WDR48 deubiquitinating complex. Interacts with PHLPP1. Interacts with RBPJ. Interacts with CBP; this interaction blocks the acetyltransferase activity of CREBBP. Interacts with ITCH; the interaction is more efficient when both USP12 and WDR48/UAF1 are involved and may mediate recruitment of the USP12 deubiquitinating complex to Notch.

It is found in the nucleus. The protein resides in the cytoplasm. The protein localises to the cell membrane. It carries out the reaction Thiol-dependent hydrolysis of ester, thioester, amide, peptide and isopeptide bonds formed by the C-terminal Gly of ubiquitin (a 76-residue protein attached to proteins as an intracellular targeting signal).. Activated by interaction with WDR20, WDR48 and DMWD through different allosteric mechanisms. In terms of biological role, deubiquitinating enzyme that plays various roles in the regulation of the immune response and inflammation. During TCR engagement and activation, translocates into the cytoplasm and deubiquitinates its substrates LAT and TRAT1 and prevents their lysosome-dependent degradation to stabilize the TCR signaling complex at the plasma membrane. Plays an essential role in the selective LPS-induced macrophage response through the activation of NF-kappa-B pathway. In addition, promotes that antiviral immune response through targeting DNA sensor IFI16 to inhibit its proteasome-dependent degradation. Participates in the interferon signaling pathway and antiviral response independently of its deubiquitinase activity by maintaining nuclear phosphorylated STAT1 levels via inhibition of its CREBBP-mediated acetylation and subsequent dephosphorylation. Plays an intrinsic role in promoting the differentiation, activation and proliferation of CD4(+) T-cell by activating the NF-kappa-B signaling pathway through deubiquitinating and stabilizing B-cell lymphoma/leukemia 10/BCL10. In myeloid-derived suppressor cells promotes the activation of the NF-kappa-B via deubiquitination and stabilization of RELA. Regulates the 'Lys-63'-linked polyubiquitin chains of BAX and thereby modulates the mitochondrial apoptotic process. Negative regulator of NOTCH signaling that specifically deubiquitinates non-activated NOTCH receptors to target them for lysosomal degradation; deubiquitination of NOTCH stimulates its transport form late endosomes to lysosomes. Protects neurons against HTT/huntingtin-induced polyglutamine expansion-dependent neurodegeneration through regulation of autophagic flux. This function is independent of deubiquitinase activity or of other components of the USP12-WDR20-WDR48 deubiquitinating complex. In complex with WDR48, acts as a potential tumor suppressor by positively regulating PHLPP1 stability. The protein is Ubiquitin carboxyl-terminal hydrolase 12 of Rattus norvegicus (Rat).